The sequence spans 429 residues: Ribosomal RNA small subunit methyltransferase B (429 aa).

S-adenosyl-L-methionine-binding positions include 254–260, aspartate 277, aspartate 303, and aspartate 322; that span reads CAAPGGK. Cysteine 375 acts as the Nucleophile in catalysis.

Belongs to the class I-like SAM-binding methyltransferase superfamily. RsmB/NOP family.

The protein localises to the cytoplasm. The catalysed reaction is cytidine(967) in 16S rRNA + S-adenosyl-L-methionine = 5-methylcytidine(967) in 16S rRNA + S-adenosyl-L-homocysteine + H(+). Specifically methylates the cytosine at position 967 (m5C967) of 16S rRNA. This is Ribosomal RNA small subunit methyltransferase B from Erwinia tasmaniensis (strain DSM 17950 / CFBP 7177 / CIP 109463 / NCPPB 4357 / Et1/99).